A 300-amino-acid chain; its full sequence is Cation-efflux pump FieF (300 aa).

Transmembrane regions (helical) follow at residues 11 to 31 (LAAV…VFAW), 40 to 60 (LASL…LLVV), 81 to 101 (LAAL…ILTG), and 114 to 134 (PEVG…LVSF). Zn(2+) is bound by residues Asp-45 and Asp-49. Zn(2+) contacts are provided by His-153 and Asp-157. The next 2 helical transmembrane spans lie at 156–176 (SDLL…KGIT) and 182–202 (FALG…YDAV).

This sequence belongs to the cation diffusion facilitator (CDF) transporter (TC 2.A.4) family. FieF subfamily. Homodimer.

Its subcellular location is the cell inner membrane. The enzyme catalyses Zn(2+)(in) + H(+)(out) = Zn(2+)(out) + H(+)(in). It catalyses the reaction Cd(2+)(in) + H(+)(out) = Cd(2+)(out) + H(+)(in). It carries out the reaction Fe(2+)(in) + H(+)(out) = Fe(2+)(out) + H(+)(in). Functionally, divalent metal cation transporter which exports Zn(2+), Cd(2+) and possibly Fe(2+). May be involved in zinc and iron detoxification by efflux. This Pectobacterium carotovorum subsp. carotovorum (strain PC1) protein is Cation-efflux pump FieF.